The chain runs to 511 residues: UDP-N-acetylmuramate--L-alanine ligase (511 aa).

127-133 (GTHGKTT) lines the ATP pocket. Residues 481–511 (VGTVPGGEVGGATTIGGTVPGGSAPGASAAG) form a disordered region. Over residues 484–504 (VPGGEVGGATTIGGTVPGGSA) the composition is skewed to gly residues.

The protein belongs to the MurCDEF family.

It localises to the cytoplasm. The enzyme catalyses UDP-N-acetyl-alpha-D-muramate + L-alanine + ATP = UDP-N-acetyl-alpha-D-muramoyl-L-alanine + ADP + phosphate + H(+). Its pathway is cell wall biogenesis; peptidoglycan biosynthesis. Functionally, cell wall formation. The chain is UDP-N-acetylmuramate--L-alanine ligase from Salinispora arenicola (strain CNS-205).